Consider the following 183-residue polypeptide: COMM domain-containing protein 8 (183 aa).

The COMM domain maps to 116–183 (QLQDFDWQVK…AANKVVLQLK (68 aa)).

Belongs to the COMM domain-containing protein 8 family. In terms of assembly, component of the commander complex consisting of the CCC subcomplex and the retriever subcomplex. Component of the CCC (COMMD/CCDC22/CCDC93) subcomplex consisting of COMMD1, COMMD2, COMMD3, COMMD4, COMMD5, COMMD6, COMMD7, COMMD8, COMMD9, COMMD10, CCDC22 and CCDC93; within the complex forms a heterodimer with COMMD4. Interacts with RELA, RELB, NFKB1/p105. Interacts with CCDC22, CCDC93, SCNN1B, CUL1, CUL2, CUL3, CUL4A, CUL4B, CUL5. Widely expressed with highest expression in thyroid.

It is found in the cytoplasm. The protein resides in the nucleus. In terms of biological role, scaffold protein in the commander complex that is essential for endosomal recycling of transmembrane cargos; the commander complex is composed of the CCC subcomplex and the retriever subcomplex. May modulate activity of cullin-RING E3 ubiquitin ligase (CRL) complexes. May down-regulate activation of NF-kappa-B. The sequence is that of COMM domain-containing protein 8 (COMMD8) from Homo sapiens (Human).